Consider the following 349-residue polypeptide: Phosphoribosylformylglycinamidine cyclo-ligase (349 aa).

This sequence belongs to the AIR synthase family.

The protein localises to the cytoplasm. The enzyme catalyses 2-formamido-N(1)-(5-O-phospho-beta-D-ribosyl)acetamidine + ATP = 5-amino-1-(5-phospho-beta-D-ribosyl)imidazole + ADP + phosphate + H(+). It functions in the pathway purine metabolism; IMP biosynthesis via de novo pathway; 5-amino-1-(5-phospho-D-ribosyl)imidazole from N(2)-formyl-N(1)-(5-phospho-D-ribosyl)glycinamide: step 2/2. The chain is Phosphoribosylformylglycinamidine cyclo-ligase from Methanococcus maripaludis (strain DSM 14266 / JCM 13030 / NBRC 101832 / S2 / LL).